We begin with the raw amino-acid sequence, 231 residues long: Flagellar L-ring protein (231 aa).

Residues 1–18 (MNRLMIVSLLGIATALGG) form the signal peptide. C19 carries the N-palmitoyl cysteine lipid modification. Residue C19 is the site of S-diacylglycerol cysteine attachment. A disordered region spans residues 118 to 141 (LSLSAEYGGSRDAKGDSQAGQSNS).

The protein belongs to the FlgH family. As to quaternary structure, the basal body constitutes a major portion of the flagellar organelle and consists of four rings (L,P,S, and M) mounted on a central rod.

The protein localises to the cell outer membrane. It is found in the bacterial flagellum basal body. Functionally, assembles around the rod to form the L-ring and probably protects the motor/basal body from shearing forces during rotation. In Pseudomonas aeruginosa (strain UCBPP-PA14), this protein is Flagellar L-ring protein.